The primary structure comprises 780 residues: MDPSAWAICCLLGSLLFHVGIPSPGPSPSVPRLRLSYRDLLSTNRSAIFLGPRGSLDLQVMYLDEYRDRLFLGSRDALYSLRLDQAWPDPREVLWLPQPGQKVECVRKGKDPLTECANFVRVLQPHNRTHLLACGTGAFQPICTFITVGHRGEHVLRLDASSVENGRGRCPHEPSRPFASTFVGGELYTGLTADFLGREAMIFRSGGPRPALRSDSDQSLLHEPRFVMAARIPDNSDRDDDKVYFFFSETVPSPDGGPGHVTISRVGRVCVNDAGGQRVLVNKWSTFLKARLVCSVPGPGGAETHFDQLEDVFLLWPKAGKSLEVYALFSTVSAVFQGFAVCVYHMVDIWEVFNGPFAHRDGPQHQWGPYGGKVPFPRPGVCPSKMTAQPGRPFGSTKDYPDEVLQFVRDHPLMFQPVRPRRGRPVLVKTHLAQRLRQIVVDRVEAEDGTYDVIFLGTDSGSVLKVIALQGGGLTEPEEVVLEELQVFKVPTPITEMEISVKRQTLYVGSPLGVARLQLHQCETYGSACAECCLARDPYCAWDGTACARYRPSSGKRRFRRQDIRHGNPAVQCLGQGQSQNKAASGLMTRVFGTEHNSTFLECLPKSPQAAVRWFLQRPGDKGTDQVKTDERVVQTAQGLLFRRLSRHDAGNYTCTTLEHGFSQTVVRFALEVIAAVQLDSLFLRESRLEEPSAWGSLASASPKTWYKDILQLTGFANLPRVDEYCERVWCRGVGERSGSFRGKGKQAKGKSWAGLELGKKMKSRVLAEHNRTPREVEAT.

Residues 1 to 22 (MDPSAWAICCLLGSLLFHVGIP) form the signal peptide. The 488-residue stretch at 32-519 (RLRLSYRDLL…SPLGVARLQL (488 aa)) folds into the Sema domain. N-linked (GlcNAc...) asparagine glycosylation occurs at asparagine 44. Cysteine 105 and cysteine 116 form a disulfide bridge. Asparagine 127 carries an N-linked (GlcNAc...) asparagine glycan. 5 disulfide bridges follow: cysteine 134–cysteine 143, cysteine 270–cysteine 382, cysteine 294–cysteine 342, cysteine 522–cysteine 540, and cysteine 603–cysteine 655. One can recognise an Ig-like C2-type domain in the interval 569 to 671 (PAVQCLGQGQ…FSQTVVRFAL (103 aa)). A glycan (N-linked (GlcNAc...) asparagine) is linked at asparagine 652.

Belongs to the semaphorin family. As to expression, highly expressed in lung and kidney. Weakly expressed in brain.

The protein localises to the secreted. Its function is as follows. Has chemorepulsive activities for sympathetic axons. Ligand of NRP2. In Mus musculus (Mouse), this protein is Semaphorin-3G (Sema3g).